An 87-amino-acid chain; its full sequence is Large ribosomal subunit protein bL31B (87 aa).

It belongs to the bacterial ribosomal protein bL31 family. Type B subfamily. Part of the 50S ribosomal subunit.

This chain is Large ribosomal subunit protein bL31B, found in Ralstonia nicotianae (strain ATCC BAA-1114 / GMI1000) (Ralstonia solanacearum).